Here is a 376-residue protein sequence, read N- to C-terminus: TelA-like protein SERP0976 (376 aa).

This sequence belongs to the TelA family.

The chain is TelA-like protein SERP0976 from Staphylococcus epidermidis (strain ATCC 35984 / DSM 28319 / BCRC 17069 / CCUG 31568 / BM 3577 / RP62A).